A 225-amino-acid polypeptide reads, in one-letter code: Imidazole glycerol phosphate synthase subunit HisH (225 aa).

The region spanning 5-220 (KNVIVDTGCA…LELDSTELNQ (216 aa)) is the Glutamine amidotransferase type-1 domain. The Nucleophile role is filled by C80. Catalysis depends on residues H195 and E197.

In terms of assembly, heterodimer of HisH and HisF.

The protein resides in the cytoplasm. It carries out the reaction 5-[(5-phospho-1-deoxy-D-ribulos-1-ylimino)methylamino]-1-(5-phospho-beta-D-ribosyl)imidazole-4-carboxamide + L-glutamine = D-erythro-1-(imidazol-4-yl)glycerol 3-phosphate + 5-amino-1-(5-phospho-beta-D-ribosyl)imidazole-4-carboxamide + L-glutamate + H(+). It catalyses the reaction L-glutamine + H2O = L-glutamate + NH4(+). It functions in the pathway amino-acid biosynthesis; L-histidine biosynthesis; L-histidine from 5-phospho-alpha-D-ribose 1-diphosphate: step 5/9. Functionally, IGPS catalyzes the conversion of PRFAR and glutamine to IGP, AICAR and glutamate. The HisH subunit catalyzes the hydrolysis of glutamine to glutamate and ammonia as part of the synthesis of IGP and AICAR. The resulting ammonia molecule is channeled to the active site of HisF. This Colwellia psychrerythraea (strain 34H / ATCC BAA-681) (Vibrio psychroerythus) protein is Imidazole glycerol phosphate synthase subunit HisH.